The primary structure comprises 330 residues: MSNKSAWQPQFDEIHSSVQEAEGFLQSSNDVQKAIDEVHYPDSLNDLSEISKNLYISSWKTASELVSTSDKGIDYTLSAMSINPNLSVPEQQHLWLQIEDSSSQNILQYFEKSNKFIAFALSKNAKVLVHCFAGISRSVTLVAAYLMKENNWNTEEALSHINERRSGISPNANFLRQLRVYFECNYQLDRSLRPYRQWLFRRYGDFAVLNTRVPSEVAYAETVRARAGQLELRCKKCRFVLASSDYLVSHEPKDENNYSHTRCTHYFLEPIRWMQPELELGNLEGRFDCPKCNSKIGSYKWQGLQCSCLQWVCPALSILQSRVDAVRKLG.

One can recognise a Tyrosine-protein phosphatase domain in the interval 45 to 187 (NDLSEISKNL…LRVYFECNYQ (143 aa)). C131 serves as the catalytic Phosphocysteine intermediate.

Belongs to the protein-tyrosine phosphatase family. Non-receptor class dual specificity subfamily.

The protein resides in the cytoplasm. Its subcellular location is the nucleus. The catalysed reaction is O-phospho-L-tyrosyl-[protein] + H2O = L-tyrosyl-[protein] + phosphate. Its function is as follows. May be directly involved in signal transduction and/or cell cycle regulation. It is necessary for maintaining growth rate or spore germination. Could show both activity toward tyrosine-protein phosphate as well as with serine-protein phosphate. This chain is Tyrosine-protein phosphatase yvh1 (yvh1), found in Schizosaccharomyces pombe (strain 972 / ATCC 24843) (Fission yeast).